A 689-amino-acid chain; its full sequence is Glycine--tRNA ligase beta subunit (689 aa).

Belongs to the class-II aminoacyl-tRNA synthetase family. Tetramer of two alpha and two beta subunits.

It localises to the cytoplasm. It carries out the reaction tRNA(Gly) + glycine + ATP = glycyl-tRNA(Gly) + AMP + diphosphate. The polypeptide is Glycine--tRNA ligase beta subunit (Actinobacillus succinogenes (strain ATCC 55618 / DSM 22257 / CCUG 43843 / 130Z)).